The sequence spans 1017 residues: MDQDTKTIIQYPTSGDEYDIPFDYLSRKFVRVSLVSDTQRILLDNITDYRYVSRTRVKLLVSTDGYSRVEIRRFTSASEMVVDFSDGSVLRATDLNVSALQSAHIAEEARDLFSTSLSIGQLSYFDAKGLQIKNVAAGVDNTDAVTVQQLNKIIADVVTTIPDSVADNIRGLWARVLGDIGITLVDGSFETGATITTRTQALWSISGRKCYTWAGALPKVVPENSTPESTGGISETAWVDSSSKALGVLLAGPSGAERVGLKQGGTVQDAINWLTFDSFDIVKDGSKDVTADIMAACVVANDLGLDIKQNDGTYLVSGNPVWPVYNSLDLNGVTLKLAAGFTGYFALTQKDSTTVYGPTSPIVQAINAAGGRTAGSGVLEGLVNSTELDGKFLFMEGADVLYYSRGTAKYWWTNTYLSNRGKLSDNLKYGVSAITKITAVTPRTKIVYYRLPNLDFGNGPANNGVIRVLNNTRFIMQGGSISNRPLKDVSKSPVIISLNYCAAFKAYDFFDPYPAFAVDSNNSLIYSYTLNFNDIADAVFENFNSQGYGWGVVGGQRSTNITYRDCNLNRVDMHDPYMGYLKVLDTRLGTWGINASGMGDMYLERVTVDLDDSAHGGYREHEGIINARGDFGGFHDGGLYIKDLTIVGEASAFEAASGHPVALVSAYSFNASLASIPESSPVTPWGFKEVIVEGLHCPFKRTGRRFNSIISAPSIQFTVYHPMRVKLEDCNFNSTAFEKFDLRGWRVTPYNPSKVGIANTLAFRPTNFVDVKDCSMVGLEFTRPTRAYDYSNFDVNLVNVKNVEEHSLSPFTLYTNQCGRYNLVGCGLQQIVDKSMTSGERANRRSTFSVTGGTWNSLSGNPTDITYGNGYDIPVVATGVMFVGPYSQTEVTGANLNVAEFVQASGCKFLSSGPTYIQPLLWSGAGGPTGASANFNVARGNTLGLNISAVNGETSQVIAATLVIPQGFSTGPAAGTTYGFTVEKNINYQLGLNARSLKANVGLVRCSDTITGVYLNA.

As to quaternary structure, homotrimer.

Its subcellular location is the virion. In terms of biological role, functions as a receptor binding protein (RBP) and probably mediates the attachment to the host capsular exopolysaccharides. Displays a depolymerase activity that specifically degrades the KL64-type polysaccharides of Klebsiella pneumoniae capsule, which allows the phage to reach the host cell membrane and bind the entry receptor. The sequence is that of Depolymerase, capsule KL64-specific from Klebsiella phage P510 (Bacteriophage P510).